The following is a 688-amino-acid chain: Probable glucan endo-1,3-beta-glucosidase btgC (688 aa).

Disordered regions lie at residues 1 to 49 (MSGP…MNGQ), 61 to 91 (DGRQ…NLGP), and 169 to 194 (QLTP…DIPY). At 1–307 (MSGPNRTYSF…PKPGGGNKKR (307 aa)) the chain is on the cytoplasmic side. The span at 175 to 188 (SVSHLSSTNPSQRN) shows a compositional bias: polar residues. Residues 308–328 (GWIVGAILAFIIIGAIVGGAV) traverse the membrane as a helical; Signal-anchor for type II membrane protein segment. The Extracellular portion of the chain corresponds to 329–688 (GGTIGHRGNE…IPDCGGKTAT (360 aa)). The segment at 334 to 363 (HRGNEEPSSASSASSSSTQTATEDTSVNGD) is disordered. Positions 341–355 (SSASSASSSSTQTAT) are enriched in low complexity. N-linked (GlcNAc...) asparagine glycosylation is found at asparagine 408, asparagine 431, and asparagine 459. Catalysis depends on glutamate 491, which acts as the Proton donor. Glutamate 590 functions as the Nucleophile in the catalytic mechanism. 2 N-linked (GlcNAc...) asparagine glycosylation sites follow: asparagine 609 and asparagine 635.

Belongs to the glycosyl hydrolase 17 family.

It is found in the cell membrane. The enzyme catalyses Hydrolysis of (1-&gt;3)-beta-D-glucosidic linkages in (1-&gt;3)-beta-D-glucans.. In terms of biological role, glucanases play a role in cell expansion during growth, in cell-cell fusion during mating, and in spore release during sporulation. This enzyme may be involved in beta-glucan degradation. Active on laminarin and lichenan. This is Probable glucan endo-1,3-beta-glucosidase btgC (btgC) from Aspergillus fumigatus (strain CBS 144.89 / FGSC A1163 / CEA10) (Neosartorya fumigata).